Reading from the N-terminus, the 113-residue chain is Putative pterin-4-alpha-carbinolamine dehydratase (113 aa).

This sequence belongs to the pterin-4-alpha-carbinolamine dehydratase family.

The enzyme catalyses (4aS,6R)-4a-hydroxy-L-erythro-5,6,7,8-tetrahydrobiopterin = (6R)-L-erythro-6,7-dihydrobiopterin + H2O. The protein is Putative pterin-4-alpha-carbinolamine dehydratase of Hydrogenovibrio crunogenus (strain DSM 25203 / XCL-2) (Thiomicrospira crunogena).